Reading from the N-terminus, the 132-residue chain is Small ribosomal subunit protein uS8 (132 aa).

The protein belongs to the universal ribosomal protein uS8 family. Part of the 30S ribosomal subunit. Contacts proteins S5 and S12.

Its function is as follows. One of the primary rRNA binding proteins, it binds directly to 16S rRNA central domain where it helps coordinate assembly of the platform of the 30S subunit. The protein is Small ribosomal subunit protein uS8 of Rhodospirillum rubrum (strain ATCC 11170 / ATH 1.1.1 / DSM 467 / LMG 4362 / NCIMB 8255 / S1).